The primary structure comprises 218 residues: Peptidyl-tRNA hydrolase (218 aa).

Tyr-19 provides a ligand contact to tRNA. Residue His-24 is the Proton acceptor of the active site. TRNA is bound by residues Tyr-68, Asn-70, and Asn-116. Positions Trp-181–Pro-218 are disordered. Positions Pro-192 to Pro-204 are enriched in pro residues.

This sequence belongs to the PTH family. As to quaternary structure, monomer.

It localises to the cytoplasm. The enzyme catalyses an N-acyl-L-alpha-aminoacyl-tRNA + H2O = an N-acyl-L-amino acid + a tRNA + H(+). Functionally, hydrolyzes ribosome-free peptidyl-tRNAs (with 1 or more amino acids incorporated), which drop off the ribosome during protein synthesis, or as a result of ribosome stalling. In terms of biological role, catalyzes the release of premature peptidyl moieties from peptidyl-tRNA molecules trapped in stalled 50S ribosomal subunits, and thus maintains levels of free tRNAs and 50S ribosomes. The chain is Peptidyl-tRNA hydrolase from Azoarcus sp. (strain BH72).